Here is a 428-residue protein sequence, read N- to C-terminus: Glutamate-1-semialdehyde 2,1-aminomutase (428 aa).

An N6-(pyridoxal phosphate)lysine modification is found at Lys-267.

The protein belongs to the class-III pyridoxal-phosphate-dependent aminotransferase family. HemL subfamily. As to quaternary structure, homodimer. Pyridoxal 5'-phosphate is required as a cofactor.

It is found in the cytoplasm. It catalyses the reaction (S)-4-amino-5-oxopentanoate = 5-aminolevulinate. It participates in porphyrin-containing compound metabolism; protoporphyrin-IX biosynthesis; 5-aminolevulinate from L-glutamyl-tRNA(Glu): step 2/2. This Persephonella marina (strain DSM 14350 / EX-H1) protein is Glutamate-1-semialdehyde 2,1-aminomutase.